A 370-amino-acid polypeptide reads, in one-letter code: Protein phosphatase 2C homolog 2 (370 aa).

The PPM-type phosphatase domain maps to 23-291 (HFGVSHMQGW…DNMTICIVAF (269 aa)). 4 residues coordinate Mn(2+): D63, G64, D233, and D282. Residues S355 and S357 each carry the phosphoserine modification.

This sequence belongs to the PP2C family. In terms of assembly, monomer. It depends on Mg(2+) as a cofactor. Requires Mn(2+) as cofactor.

It is found in the nucleus. Its subcellular location is the cytoplasm. The protein localises to the cytosol. The enzyme catalyses O-phospho-L-seryl-[protein] + H2O = L-seryl-[protein] + phosphate. The catalysed reaction is O-phospho-L-threonyl-[protein] + H2O = L-threonyl-[protein] + phosphate. Its activity is regulated as follows. Activity is reduced when phosphosrylated at Ser-355/Ser-357. Dephosphorylating regulator for many key proteins. Has an important role in osmotic stability and cell shape control. It may negatively regulate the osmosensing signal transmitted through wis1 map kinase. In Schizosaccharomyces pombe (strain 972 / ATCC 24843) (Fission yeast), this protein is Protein phosphatase 2C homolog 2 (ptc2).